Here is a 283-residue protein sequence, read N- to C-terminus: MKTPFSKMDGLGNQIIVADMRESTHALTPQAILSLAADSQTYFDQIMAIHLPTKKEADFRIEIWNADGSMANACGNGTRCVIAWLTDHNYGEIFRLETPAGIVEGKRQIDNLISVDMGCPNFNAKEMPVSREIIDTNHVELTAGPLRDACLVSIGNLHAIFFVENDIQYIPLEKYGSKLEHDPLFPQRCNISIACVTSQESLNLRTWERGAGLTQACGSAACASAVAAYRRGLTKRNIDVNLPGGTLNIFYREDDHIIMTGPVKYGFSGFLNPLTGSYKKDDF.

Substrate contacts are provided by Asn-13, Gln-45, and Asn-65. Cys-74 functions as the Proton donor in the catalytic mechanism. Substrate contacts are provided by residues 75-76 (GN), Asn-156, Asn-190, and 208-209 (ER). Residue Cys-217 is the Proton acceptor of the active site. 218–219 (GS) is a binding site for substrate.

The protein belongs to the diaminopimelate epimerase family. Homodimer.

It is found in the cytoplasm. It carries out the reaction (2S,6S)-2,6-diaminopimelate = meso-2,6-diaminopimelate. It participates in amino-acid biosynthesis; L-lysine biosynthesis via DAP pathway; DL-2,6-diaminopimelate from LL-2,6-diaminopimelate: step 1/1. In terms of biological role, catalyzes the stereoinversion of LL-2,6-diaminopimelate (L,L-DAP) to meso-diaminopimelate (meso-DAP), a precursor of L-lysine and an essential component of the bacterial peptidoglycan. The sequence is that of Diaminopimelate epimerase from Bartonella henselae (strain ATCC 49882 / DSM 28221 / CCUG 30454 / Houston 1) (Rochalimaea henselae).